The sequence spans 140 residues: Protein SamA (140 aa).

Residues Ser61 and Lys98 each act as for autocatalytic cleavage activity in the active site.

The protein belongs to the peptidase S24 family.

Involved in UV protection and mutation. The protein is Protein SamA (samA) of Salmonella typhimurium (strain LT2 / SGSC1412 / ATCC 700720).